The sequence spans 230 residues: Large ribosomal subunit protein uL1 (230 aa).

The protein belongs to the universal ribosomal protein uL1 family. As to quaternary structure, part of the 50S ribosomal subunit.

In terms of biological role, binds directly to 23S rRNA. The L1 stalk is quite mobile in the ribosome, and is involved in E site tRNA release. Its function is as follows. Protein L1 is also a translational repressor protein, it controls the translation of the L11 operon by binding to its mRNA. This chain is Large ribosomal subunit protein uL1, found in Chromohalobacter salexigens (strain ATCC BAA-138 / DSM 3043 / CIP 106854 / NCIMB 13768 / 1H11).